Reading from the N-terminus, the 399-residue chain is S-adenosylmethionine synthase (399 aa).

ATP is bound at residue His15. Residue Asp17 coordinates Mg(2+). Residue Glu43 coordinates K(+). Positions 56 and 99 each coordinate L-methionine. The tract at residues 99-109 (QSPDIAGGVDH) is flexible loop. ATP is bound by residues 175 to 177 (DAK), 242 to 243 (RF), Asp251, 257 to 258 (RK), Ala274, and Lys278. Asp251 is an L-methionine binding site. Residue Lys282 participates in L-methionine binding.

This sequence belongs to the AdoMet synthase family. Homotetramer; dimer of dimers. Mg(2+) serves as cofactor. The cofactor is K(+).

The protein resides in the cytoplasm. It carries out the reaction L-methionine + ATP + H2O = S-adenosyl-L-methionine + phosphate + diphosphate. The protein operates within amino-acid biosynthesis; S-adenosyl-L-methionine biosynthesis; S-adenosyl-L-methionine from L-methionine: step 1/1. Functionally, catalyzes the formation of S-adenosylmethionine (AdoMet) from methionine and ATP. The overall synthetic reaction is composed of two sequential steps, AdoMet formation and the subsequent tripolyphosphate hydrolysis which occurs prior to release of AdoMet from the enzyme. In Lactobacillus helveticus (strain DPC 4571), this protein is S-adenosylmethionine synthase.